The following is a 1226-amino-acid chain: Chromosome partition protein Smc (1226 aa).

32-39 (PNGCGKSN) contacts ATP. 2 coiled-coil regions span residues 173–231 (ITKF…IKRN) and 269–491 (NSLE…SKSL). Residues 527 to 635 (YQLLGNLIQC…FDGYFIASKF (109 aa)) enclose the SMC hinge domain. Coiled-coil stretches lie at residues 679–741 (QGVV…AAKK), 775–965 (MLES…LREA), and 1006–1078 (HRRY…KSKE).

This sequence belongs to the SMC family. In terms of assembly, homodimer.

It is found in the cytoplasm. Required for chromosome condensation and partitioning. This chain is Chromosome partition protein Smc, found in Halobacteriovorax marinus (strain ATCC BAA-682 / DSM 15412 / SJ) (Bacteriovorax marinus).